The chain runs to 287 residues: Elongation factor Ts (287 aa).

Residues threonine 79–valine 82 form an involved in Mg(2+) ion dislocation from EF-Tu region.

It belongs to the EF-Ts family.

It is found in the cytoplasm. Functionally, associates with the EF-Tu.GDP complex and induces the exchange of GDP to GTP. It remains bound to the aminoacyl-tRNA.EF-Tu.GTP complex up to the GTP hydrolysis stage on the ribosome. The polypeptide is Elongation factor Ts (Anaplasma phagocytophilum (strain HZ)).